The primary structure comprises 231 residues: Axial regulator YABBY 4 (231 aa).

The C4-type zinc finger occupies 26–53 (CGFCTTILLVSVPFTSLSMVVTVRCGHC). Disordered regions lie at residues 98-120 (KVNQ…EDED) and 211-231 (NNGF…SPFE).

Belongs to the YABBY family. Interacts with SPL/NZZ.

Its subcellular location is the nucleus. In terms of biological role, essential for the formation and the abaxial-adaxial asymmetric growth of the ovule outer integument. The chain is Axial regulator YABBY 4 (YAB4) from Arabidopsis thaliana (Mouse-ear cress).